Reading from the N-terminus, the 477-residue chain is Ubiquinone biosynthesis monooxygenase COQ6, mitochondrial (477 aa).

Residues 1–25 (MLGVLRIQGALASAGQARLLSVRLL) constitute a mitochondrion transit peptide.

The protein belongs to the UbiH/COQ6 family. As to quaternary structure, component of a multi-subunit COQ enzyme complex. FAD serves as cofactor.

It is found in the mitochondrion inner membrane. It catalyses the reaction a 4-hydroxy-3-(all-trans-polyprenyl)benzoate + 2 reduced [2Fe-2S]-[ferredoxin] + O2 + 2 H(+) = a 3,4-dihydroxy-5-(all-trans-polyprenyl)benzoate + 2 oxidized [2Fe-2S]-[ferredoxin] + H2O. The catalysed reaction is a 2-methoxy-6-(all-trans-polyprenyl)phenol + 2 reduced [2Fe-2S]-[ferredoxin] + O2 + 2 H(+) = a 2-methoxy-6-(all-trans-polyprenyl)benzene-1,4-diol + 2 oxidized [2Fe-2S]-[ferredoxin] + H2O. It participates in cofactor biosynthesis; ubiquinone biosynthesis. Its function is as follows. FAD-dependent monooxygenase required for two non-consecutive steps during ubiquinone biosynthesis. Required for the C5-ring hydroxylation during ubiquinone biosynthesis by catalyzing the hydroxylation of 4-hydroxy-3-(all-trans-polyprenyl)benzoic acid to 3,4-dihydroxy-5-(all-trans-polyprenyl)benzoic acid. Also acts downstream of coq4, for the C1-hydroxylation during ubiquinone biosynthesis by catalyzing the hydroxylation of 2-methoxy-6-(all-trans-polyprenyl)phenol to 2-methoxy-6-(all-trans-polyprenyl)benzene-1,4-diol. The electrons required for the hydroxylation reaction are funneled indirectly to Coq6 from NADPH via a ferredoxin/ferredoxin reductase system. This chain is Ubiquinone biosynthesis monooxygenase COQ6, mitochondrial, found in Drosophila melanogaster (Fruit fly).